The chain runs to 1491 residues: Terminal uridylyltransferase 7 (1491 aa).

T64 carries the phosphothreonine modification. S132 and S172 each carry phosphoserine. Residues 165–203 form a disordered region; sequence MSEMEAGSPENKKQRSRPRKPRRTRTEDSEQDGDLDGPV. Basic residues predominate over residues 178–187; that stretch reads QRSRPRKPRR. The segment at 244–274 adopts a Matrin-type zinc-finger fold; it reads YTCKLCDALIDSIPFAHKHIKEKRHKKNLKE. The 50-residue stretch at 551 to 600 folds into the PAP-associated 1 domain; that stretch reads VGQLWVELLRFYALEFNLADLVISIRVKELISRESKDWPKKRIAIEDPYS. Phosphoserine is present on residues S600 and S747. Disordered stretches follow at residues 740 to 774 and 834 to 911; these read AELP…KHPE and QSRT…CGEN. Residues 844–857 are compositionally biased toward acidic residues; sequence DDEEEEEEEEEEEE. T865 carries the post-translational modification Phosphothreonine. The span at 885-897 shows a compositional bias: acidic residues; the sequence is GEEDALSEEDDLA. S891 is modified (phosphoserine). Residues 947 to 1491 form a sufficient for monouridylation activity region; the sequence is RKLTFTKGKS…ASVKRTQQES (545 aa). The segment at 959-976 adopts a CCHC-type 1 zinc-finger fold; the sequence is VVCSLCKREGHLKKDCPE. Residues 1043–1046, 1053–1056, N1126, K1148, 1166–1170, and H1282 contribute to the UTP site; these read SSKN, SDLD, and SYAYT. The Mg(2+) site is built by D1054 and D1056. A PAP-associated 2 domain is found at 1230–1282; sequence VGQLWLGLLRFYTEEFDFKEHVISIRRKSLLTTFKKQWTSKYIVIEDPFDLNH. The CCHC-type 2 zinc-finger motif lies at 1341–1358; the sequence is RCCRICGKIGHFMKDCPM. Disordered stretches follow at residues 1362-1399 and 1463-1491; these read VRRR…EKEV and PQFK…QQES. Residues 1377–1399 show a composition bias toward basic and acidic residues; that stretch reads SESKEKRSKEDKEIQNKYTEKEV. The segment at 1447 to 1464 adopts a CCHC-type 3 zinc-finger fold; it reads KRCFICGREGHIKKECPQ. The span at 1470 to 1481 shows a compositional bias: polar residues; sequence GSLSSKYMTQGR.

The protein belongs to the DNA polymerase type-B-like family. Mg(2+) is required as a cofactor. The cofactor is Mn(2+).

It is found in the cytoplasm. It carries out the reaction RNA(n) + UTP = RNA(n)-3'-uridine ribonucleotide + diphosphate. Uridylyltransferase that mediates the terminal uridylation of mRNAs with short (less than 25 nucleotides) poly(A) tails, hence facilitating global mRNA decay. Essential for both oocyte maturation and fertility. Through 3' terminal uridylation of mRNA, sculpts, with TUT7, the maternal transcriptome by eliminating transcripts during oocyte growth. Involved in microRNA (miRNA)-induced gene silencing through uridylation of deadenylated miRNA targets. Also acts as a suppressor of miRNA biogenesis by mediating the terminal uridylation of miRNA precursors, including that of let-7 (pre-let-7). Uridylated pre-let-7 RNA is not processed by Dicer and undergo degradation. Pre-let-7 uridylation is strongly enhanced in the presence of LIN28A. Due to functional redundancy between ZCCHC6 and ZCCHC11, the identification of the specific role of each of these proteins is difficult. Involved in microRNA (miRNA)-induced gene silencing through uridylation of deadenylated miRNA targets. Also functions as an integral regulator of microRNA biogenesiS using 3 different uridylation mechanisms. Acts as a suppressor of miRNA biogenesis by mediating the terminal uridylation of some miRNA precursors, including that of let-7 (pre-let-7). Uridylated pre-let-7 RNA is not processed by Dicer and undergo degradation. Pre-let-7 oligouridylation is strongly enhanced in the presence of LIN28A. In the absence of LIN28A, TUT7 and TUT4 monouridylate group II pre-miRNAs, which includes most of pre-let7 members, that shapes an optimal 3' end overhang for efficient processing. Add oligo-U tails to truncated pre-miRNAS with a 5' overhang which may promote rapid degradation of non-functional pre-miRNA species. Does not play a role in replication-dependent histone mRNA degradation. Due to functional redundancy between TUT4 and TUT7, the identification of the specific role of each of these proteins is difficult. TUT4 and TUT7 restrict retrotransposition of long interspersed element-1 (LINE-1) in cooperation with MOV10 counteracting the RNA chaperonne activity of L1RE1. TUT7 uridylates LINE-1 mRNAs in the cytoplasm which inhibits initiation of reverse transcription once in the nucleus, whereas uridylation by TUT4 destabilizes mRNAs in cytoplasmic ribonucleoprotein granules. The sequence is that of Terminal uridylyltransferase 7 from Mus musculus (Mouse).